A 324-amino-acid chain; its full sequence is Aquaporin-4 (324 aa).

Topologically, residues 1–36 (MSDRPAARPWGKCGSLCRREEIMVAFKGVWTQAFWK) are cytoplasmic. 2 S-palmitoyl cysteine lipidation sites follow: Cys13 and Cys17. A helical membrane pass occupies residues 37 to 57 (AVTAEFLAMLIFVLLSLGSTI). The Extracellular segment spans residues 58–69 (NWGGKENPLPVD). A helical membrane pass occupies residues 70–89 (MVLISLCFGLSIATMVQCFG). The Cytoplasmic segment spans residues 90 to 93 (HISG). Residues 94–101 (GHINPAVT) constitute an intramembrane region (discontinuously helical). The short motif at 97-99 (NPA) is the NPA 1 element. Over 102 to 115 (VAMVCTRKISIAKS) the chain is Cytoplasmic. Phosphoserine; by PKG is present on Ser111. A helical transmembrane segment spans residues 116–136 (VFYIAAQCLGAIIGAGILYLV). The Extracellular segment spans residues 137–155 (TPPSVVGGLGVTTVHGNLT). Asn153 carries N-linked (GlcNAc...) asparagine glycosylation. The helical transmembrane segment at 156–176 (AGHGLLVELIITFQLVFTIFA) threads the bilayer. The Cytoplasmic segment spans residues 177-184 (SCDSKRTD). The residue at position 180 (Ser180) is a Phosphoserine; by PKC. The chain crosses the membrane as a helical span at residues 185–205 (VTGSIALAIGFSVAIGHLFAI). The N-linked (GlcNAc...) asparagine glycan is linked to Asn206. Residues 206–208 (NYT) lie on the Extracellular side of the membrane. An intramembrane region (discontinuously helical) is located at residues 209-222 (GASMNPARSFGPAV). Positions 213-215 (NPA) match the NPA 2 motif. At 223–231 (IMGNWENHW) the chain is on the extracellular side. A helical membrane pass occupies residues 232–252 (IYWVGPIIGAVLAGGLYEYVF). The Cytoplasmic segment spans residues 253–324 (CPDVELKRRF…PSGEIAQTQH (72 aa)). Phosphoserine is present on residues Ser276 and Ser285. Thr289 bears the Phosphothreonine mark. Residues 305-316 (DRGDEKKGKDPS) are compositionally biased toward basic and acidic residues. The interval 305-324 (DRGDEKKGKDPSGEIAQTQH) is disordered.

Belongs to the MIP/aquaporin (TC 1.A.8) family. As to quaternary structure, homotetramer. The tetramers can form oligomeric arrays in membranes. The size of the oligomers differs between tissues and is smaller in skeletal muscle than in brain. Interaction between AQP4 oligomeric arrays in close-by cells can contribute to cell-cell adhesion. Part of a complex containing MLC1, TRPV4, HEPACAM and ATP1B1. Phosphorylation by PKC at Ser-180 reduces conductance by 50%. Phosphorylation by PKG at Ser-111 in response to glutamate increases conductance by 40%. In terms of processing, isoform 2: Palmitoylated on its N-terminal region. Isoform 1: Not palmitoylated. Not expressed in kidney, Detectable in gastric parietal and brain astroglial cells. The absence of AQP4 in kidney may be critical for the extreme urinary concentration that occurs in this species (up to 5,000 mosmol/kg H(2)O).

Its subcellular location is the cell membrane. The protein resides in the basolateral cell membrane. It is found in the endosome membrane. It localises to the sarcolemma. The protein localises to the cell projection. The catalysed reaction is H2O(in) = H2O(out). Functionally, forms a water-specific channel. Plays an important role in brain water homeostasis and in glymphatic solute transport. Required for a normal rate of water exchange across the blood brain interface. Required for normal levels of cerebrospinal fluid influx into the brain cortex and parenchyma along paravascular spaces that surround penetrating arteries, and for normal drainage of interstitial fluid along paravenous drainage pathways. Thereby, it is required for normal clearance of solutes from the brain interstitial fluid, including soluble beta-amyloid peptides derived from APP. Plays a redundant role in urinary water homeostasis and urinary concentrating ability. The chain is Aquaporin-4 (AQP4) from Dipodomys merriami (Merriam's kangaroo rat).